The chain runs to 505 residues: Maturase K (505 aa).

The protein belongs to the intron maturase 2 family. MatK subfamily.

It is found in the plastid. The protein localises to the chloroplast. Usually encoded in the trnK tRNA gene intron. Probably assists in splicing its own and other chloroplast group II introns. In Morus alba (White mulberry), this protein is Maturase K.